Here is a 77-residue protein sequence, read N- to C-terminus: MESIFNNSFATLIAYIGIISTYLLVIPLLLFYWMNNRWNIMGKFERLGIYGLVFLFFPGLILFSPFLNLRLKGTGKG.

Helical transmembrane passes span 12 to 32 and 47 to 67; these read LIAY…LLFY and LGIY…SPFL.

This sequence belongs to the complex I NdhL subunit family. In terms of assembly, NDH-1 can be composed of about 15 different subunits; different subcomplexes with different compositions have been identified which probably have different functions.

It is found in the cellular thylakoid membrane. The catalysed reaction is a plastoquinone + NADH + (n+1) H(+)(in) = a plastoquinol + NAD(+) + n H(+)(out). The enzyme catalyses a plastoquinone + NADPH + (n+1) H(+)(in) = a plastoquinol + NADP(+) + n H(+)(out). NDH-1 shuttles electrons from an unknown electron donor, via FMN and iron-sulfur (Fe-S) centers, to quinones in the respiratory and/or the photosynthetic chain. The immediate electron acceptor for the enzyme in this species is believed to be plastoquinone. Couples the redox reaction to proton translocation, and thus conserves the redox energy in a proton gradient. Cyanobacterial NDH-1 also plays a role in inorganic carbon-concentration. In Prochlorococcus marinus (strain MIT 9301), this protein is NAD(P)H-quinone oxidoreductase subunit L.